Here is a 392-residue protein sequence, read N- to C-terminus: MPRSNYLFTSESVSEGHPDKVCDRISDTVVDAYLAAMPEARLGVETLATTNRIVIAGEVRGPDSVTFKDLEALTREAVKDIGYEQSGFHWKNNDVAIHLHAQSADIAQGVDAAGNKDEGAGDQGIMFGYAADETPELMPAPIFYAHKILKDLADARKARQGDAAKLGPDAKSQVTVRYENGRPVEVTQIVLSTQHLDESLDSADVRAIVEPYILKALPQGWVNEGTVWHVNPTGKFVIGGPDGDAGLTGRKIIVDTYGGAAPHGGGAFSGKDPTKVDRSAAYAARYLAKNVVAAGLASRATIQLAYAIGVSKPLSIYVDLHGTGTVDEAKLEAVLMDAMDLSPRGIRTALSLNKPIYARTSAYGHFGRAPEADGGFSWERTDLAGKLKSALA.

His-17 contacts ATP. Asp-19 serves as a coordination point for Mg(2+). Residue Glu-45 coordinates K(+). L-methionine-binding residues include Glu-58 and Gln-102. The interval 102–112 (QSADIAQGVDA) is flexible loop. ATP-binding positions include 169-171 (DAK), 235-236 (KF), Asp-244, 250-251 (RK), Ala-267, and Lys-271. Residue Asp-244 coordinates L-methionine. Lys-275 contributes to the L-methionine binding site.

It belongs to the AdoMet synthase family. Homotetramer; dimer of dimers. Requires Mg(2+) as cofactor. K(+) serves as cofactor.

It is found in the cytoplasm. It catalyses the reaction L-methionine + ATP + H2O = S-adenosyl-L-methionine + phosphate + diphosphate. Its pathway is amino-acid biosynthesis; S-adenosyl-L-methionine biosynthesis; S-adenosyl-L-methionine from L-methionine: step 1/1. Catalyzes the formation of S-adenosylmethionine (AdoMet) from methionine and ATP. The overall synthetic reaction is composed of two sequential steps, AdoMet formation and the subsequent tripolyphosphate hydrolysis which occurs prior to release of AdoMet from the enzyme. The protein is S-adenosylmethionine synthase of Methylobacterium radiotolerans (strain ATCC 27329 / DSM 1819 / JCM 2831 / NBRC 15690 / NCIMB 10815 / 0-1).